Here is a 373-residue protein sequence, read N- to C-terminus: Transcription factor SPATULA (373 aa).

The segment covering 1 to 21 (MISQREEREEKKQRVMGDKKL) has biased composition (basic and acidic residues). Disordered regions lie at residues 1–46 (MISQ…PSSS) and 141–210 (VQGN…KRRR). Residues 141 to 160 (VQGNSSGTRVSSSSVGASGN) show a composition bias toward low complexity. Residues 161-177 (ETDEYDCESEEGGEAVV) are compositionally biased toward acidic residues. Low complexity predominate over residues 182–191 (SSKSGPSSRS). Over residues 197–210 (RAAEVHNLSEKRRR) the composition is skewed to basic and acidic residues. The bHLH domain maps to 197-246 (RAAEVHNLSEKRRRSRINEKMKALQSLIPNSNKTDKASMLDEAIEYLKQL).

As to quaternary structure, homodimer. Interacts with HEC1, HEC2 and HEC3. Binds to RGL2 and RGA. Expressed in lateral root caps, young leaves, stipules, maturing pith cells of the stem, differentiating vascular cells, shoot apical meristems and flowers.

It localises to the nucleus. Functionally, transcription factor that plays a role in floral organogenesis. Promotes the growth of carpel margins and of pollen tract tissues derived from them. The sequence is that of Transcription factor SPATULA (SPT) from Arabidopsis thaliana (Mouse-ear cress).